The chain runs to 953 residues: TPR repeat-containing protein ZIP4 (953 aa).

The stretch at 129 to 162 is one TPR 1 repeat; sequence ASFFHRSGLAWLDLGRVDLASACFEKATPLVSAA. The interval 248 to 269 is disordered; sequence AASPSSSSPRTPPYGGATPKTP. TPR repeat units lie at residues 432 to 465 and 473 to 506; these read HALL…VSRD and ADCF…EPNI. The interval 924–953 is disordered; it reads RVSGDEPDECSQEEAPKASISGSMSQPVLV. Positions 943–953 are enriched in polar residues; sequence ISGSMSQPVLV.

The protein localises to the nucleus. It localises to the chromosome. Required for crossover formation, complete synapsis of homologous chromosomes and bivalent formation during meiosis. Is specific to recombination events resulting in interference-sensitive crossovers (class I meiotic crossover) and works cooperatively with MER3 to promote crossovers. The protein is TPR repeat-containing protein ZIP4 of Oryza sativa subsp. indica (Rice).